A 147-amino-acid chain; its full sequence is uncharacterized protein (147 aa).

The region spanning 7–147 (LEINYKTDEL…GHDVLVWAPK (141 aa)) is the N-acetyltransferase domain.

This is an uncharacterized protein from Staphylococcus haemolyticus (strain JCSC1435).